A 72-amino-acid polypeptide reads, in one-letter code: Translation initiation factor IF-1 1 (72 aa).

Residues 1–72 form the S1-like domain; it reads MSKEDVIQMQ…TKGRIVFRAK (72 aa).

Belongs to the IF-1 family. In terms of assembly, component of the 30S ribosomal translation pre-initiation complex which assembles on the 30S ribosome in the order IF-2 and IF-3, IF-1 and N-formylmethionyl-tRNA(fMet); mRNA recruitment can occur at any time during PIC assembly.

Its subcellular location is the cytoplasm. Functionally, one of the essential components for the initiation of protein synthesis. Stabilizes the binding of IF-2 and IF-3 on the 30S subunit to which N-formylmethionyl-tRNA(fMet) subsequently binds. Helps modulate mRNA selection, yielding the 30S pre-initiation complex (PIC). Upon addition of the 50S ribosomal subunit IF-1, IF-2 and IF-3 are released leaving the mature 70S translation initiation complex. The polypeptide is Translation initiation factor IF-1 1 (Thiobacillus denitrificans (strain ATCC 25259 / T1)).